A 602-amino-acid chain; its full sequence is Elongation factor 4 (602 aa).

One can recognise a tr-type G domain in the interval 7 to 188 (ENIRNFSIIA…AIIDLVPPPK (182 aa)). GTP contacts are provided by residues 19–24 (DHGKST) and 135–138 (NKID).

The protein belongs to the TRAFAC class translation factor GTPase superfamily. Classic translation factor GTPase family. LepA subfamily.

It is found in the cell inner membrane. The catalysed reaction is GTP + H2O = GDP + phosphate + H(+). In terms of biological role, required for accurate and efficient protein synthesis under certain stress conditions. May act as a fidelity factor of the translation reaction, by catalyzing a one-codon backward translocation of tRNAs on improperly translocated ribosomes. Back-translocation proceeds from a post-translocation (POST) complex to a pre-translocation (PRE) complex, thus giving elongation factor G a second chance to translocate the tRNAs correctly. Binds to ribosomes in a GTP-dependent manner. The chain is Elongation factor 4 from Chlamydia pneumoniae (Chlamydophila pneumoniae).